Here is a 71-residue protein sequence, read N- to C-terminus: Bacteriocin carnobacteriocin-A (71 aa).

A propeptide spanning residues 1 to 18 is cleaved from the precursor; the sequence is MNNVKELSIKEMQQVTGG. C40 and C69 are oxidised to a cystine.

Its subcellular location is the secreted. In terms of biological role, has antibacterial activity. The sequence is that of Bacteriocin carnobacteriocin-A (cbnBA) from Carnobacterium maltaromaticum (Carnobacterium piscicola).